Consider the following 101-residue polypeptide: MGTRFLLALFLVLLVLGFEVQGAPLPQQEESAGPALLTQMRESLSGYWDSAKAAASSLYQKTYLPAVDEKLRDMYSKSTAAVSTYAGIFTDQVLSMLRGEE.

The signal sequence occupies residues 1–22 (MGTRFLLALFLVLLVLGFEVQG). The lipid binding stretch occupies residues 66–74 (AVDEKLRDM). Positions 78–101 (STAAVSTYAGIFTDQVLSMLRGEE) are lipoprotein lipase cofactor.

The protein belongs to the apolipoprotein C2 family. Proapolipoprotein C-II is synthesized as a sialic acid containing glycoprotein which is subsequently desialylated prior to its proteolytic processing. In terms of processing, proapolipoprotein C-II, the major form found in plasma undergoes proteolytic cleavage of its N-terminal hexapeptide to generate apolipoprotein C-II, which occurs as the minor form in plasma.

It is found in the secreted. Component of chylomicrons, very low-density lipoproteins (VLDL), low-density lipoproteins (LDL), and high-density lipoproteins (HDL) in plasma. Plays an important role in lipoprotein metabolism as an activator of lipoprotein lipase. Both proapolipoprotein C-II and apolipoprotein C-II can activate lipoprotein lipase. The chain is Apolipoprotein C-II (APOC2) from Saimiri boliviensis boliviensis (Bolivian squirrel monkey).